Reading from the N-terminus, the 556-residue chain is Undecaprenyl phosphate-alpha-4-amino-4-deoxy-L-arabinose arabinosyl transferase (556 aa).

11 helical membrane passes run 5-25, 88-108, 116-136, 179-199, 207-227, 258-278, 296-316, 319-339, 355-375, 384-404, and 410-430; these read MIKL…LLPL, FASV…ALLL, LLAA…TYSV, FMTK…PVAL, LLLF…PWAL, APFW…LALL, FLLL…KGKL, YILP…SGLA, LAFG…IIMP, LTIV…AVSL, and WGYL…GSIP.

It belongs to the glycosyltransferase 83 family.

It localises to the cell inner membrane. The enzyme catalyses 4-amino-4-deoxy-alpha-L-arabinopyranosyl di-trans,octa-cis-undecaprenyl phosphate + lipid IVA = lipid IIA + di-trans,octa-cis-undecaprenyl phosphate.. The protein operates within lipopolysaccharide metabolism; 4-amino-4-deoxy-beta-L-arabinose-lipid A biosynthesis. Functionally, catalyzes the transfer of the L-Ara4N moiety of the glycolipid undecaprenyl phosphate-alpha-L-Ara4N to lipid A. The modified arabinose is attached to lipid A and is required for resistance to polymyxin and cationic antimicrobial peptides. The protein is Undecaprenyl phosphate-alpha-4-amino-4-deoxy-L-arabinose arabinosyl transferase of Pectobacterium carotovorum subsp. carotovorum (strain PC1).